Reading from the N-terminus, the 815-residue chain is Chromatin assembly factor 1 subunit FAS1 (815 aa).

Disordered stretches follow at residues 1 to 39 (MDEV…TSEE), 292 to 330 (NNKE…KKQL), 434 to 477 (KLST…KKSR), 502 to 577 (QVVK…EGVQ), and 791 to 815 (RCLP…NENA). Basic and acidic residues-rich tracts occupy residues 10–21 (NENRKTMIEPKK) and 292–328 (NNKE…ELKK). Residues 244 to 336 (EEKLLLKQLE…KKQLQVQKQA (93 aa)) are a coiled coil. Acidic residues-rich tracts occupy residues 516-532 (LDYE…EEAG) and 554-576 (DDED…DEGV). The segment covering 806–815 (AAERLENENA) has biased composition (basic and acidic residues).

The protein belongs to the CHAF1A family. As to quaternary structure, component of the chromatin assembly factor 1 (CAF-1) complex, composed of FAS1, FAS2 and MSI1. Interacts with CYP71. In terms of tissue distribution, expressed in the shoot apical meristem, young leaf primordia, root tip and first lateral root primordium at the hypocotyl/root junction.

Its subcellular location is the nucleus. Its function is as follows. Component of the chromatin assembly factor complex (CAF-1) involved in chromatin assembly following DNA replication and DNA repair. Assembles histone octamers onto replicating DNA in vitro. Required for several aspects of development, including seedling growth and leaf hair differentiation. Plays a critical role in the organization of shoot apical meristem (SAM) and root apical meristem (RAM) during postembryonic development by facilitating stable maintenance of gene expression states. Seems not required to maintain transcriptional repression of heterochromatic genes. Involved in heterologous recombination. May repress endocycle. This is Chromatin assembly factor 1 subunit FAS1 (FAS1) from Arabidopsis thaliana (Mouse-ear cress).